The sequence spans 523 residues: Cytochrome P450 monooxygenase ple1 (523 aa).

The chain crosses the membrane as a helical span at residues 9-29 (ALPVLAIWAAIGLAYWIDSQK). Asparagine 141 carries N-linked (GlcNAc...) asparagine glycosylation. Cysteine 444 is a heme binding site.

Belongs to the cytochrome P450 family. Heme serves as cofactor.

It is found in the membrane. It functions in the pathway secondary metabolite biosynthesis; terpenoid biosynthesis. Functionally, cytochrome P450 monooxygenase; part of the gene cluster that mediates the biosynthesis of pleuromutilin, a tricyclic diterpene showing antibacterial properties. The geranylgeranyl diphosphate (GGPP) synthase ple4 catalyzes the first step in pleuromutilin biosynthesis. GGPP is then substrate of the premutilin synthase (PS) ple3 to yield premutilin. Premutilin synthase is a bifunctional enzyme composed of the fusion of a class II diterpene cyclase (DTC) and a class I diterpene synthase (DTS), with the corresponding domains and active sites containing characteristic aspartate-rich motifs. GGPP is first converted to mutildienyl-diphosphate (MPP) at the class II DTC site. MPP is subsequently further cyclized at the class I DTS site, followed by a 1,5-hydride shift and addition of water prior to terminating deprotonation, to yield premutilin. The cytochrome P450 monooxygenases ple5 and ple6 hydroxylate premutilin at C-11 and C-3, respectively, producing 11-hydroxypremutilin and 3-hydroxypremutilin. The combination of the actions of both ple5 and ple6 leads to the production of 3,11-dihydroxypremutilin. The short chain dehydrogenase ple7 further converts 3,11-dihydroxypremutilin into mutilin. The acetyltransferase ple2 then acetylates mutilin to produce 14-O-acetylmutilin. Finally, the cytochrome P450 monooxygenase ple1 catalyzes hydroxylation on the alpha position of the acetyl side chain of 14-O-acetylmutilin to yield pleuromutilin. The sequence is that of Cytochrome P450 monooxygenase ple1 from Rhodocybe pseudopiperita (Clitopilus pseudopiperitus).